Reading from the N-terminus, the 328-residue chain is MNERKLNKDFLEIYEMSISGKIKKEDALEILKLDVYDLLHISYHLKKAFNKEKIETCSIINAKSGFCSENCNFCSQSIHNNSKINIYGLKSKEEILKSAKSIENYSNRFSIVSSGKKISEKEFEDILEIIDEIKNKTKLKVCVSLGLLNKSQLKALMKKNIRIHNNLETSKNYFKNICTTHEYEDKVDVIKNGKKLGLQICSGGIFGLGEDIIDRIDLLYELKELNVDSISLNLLNPIEGTKMREKINSKEIKSIEPIDALKSICISRIIMPERVIRLCGGREYVLKDLQSLSLLAVDGLMIGNYLTTSGRNIQSDLRMIEDMGFKKG.

The region spanning 49–273 (FNKEKIETCS…ICISRIIMPE (225 aa)) is the Radical SAM core domain. Cysteine 67, cysteine 71, and cysteine 74 together coordinate [4Fe-4S] cluster. The [2Fe-2S] cluster site is built by serine 110, cysteine 142, cysteine 201, and arginine 277.

It belongs to the radical SAM superfamily. Biotin synthase family. As to quaternary structure, homodimer. [4Fe-4S] cluster is required as a cofactor. It depends on [2Fe-2S] cluster as a cofactor.

The enzyme catalyses (4R,5S)-dethiobiotin + (sulfur carrier)-SH + 2 reduced [2Fe-2S]-[ferredoxin] + 2 S-adenosyl-L-methionine = (sulfur carrier)-H + biotin + 2 5'-deoxyadenosine + 2 L-methionine + 2 oxidized [2Fe-2S]-[ferredoxin]. Its pathway is cofactor biosynthesis; biotin biosynthesis; biotin from 7,8-diaminononanoate: step 2/2. Functionally, catalyzes the conversion of dethiobiotin (DTB) to biotin by the insertion of a sulfur atom into dethiobiotin via a radical-based mechanism. The protein is Biotin synthase of Methanococcus vannielii (strain ATCC 35089 / DSM 1224 / JCM 13029 / OCM 148 / SB).